The primary structure comprises 916 residues: Probable dipeptidyl-aminopeptidase B (916 aa).

Disordered stretches follow at residues 1–35 (MGRT…SGLS) and 67–86 (DAEA…KLGS). Residues 1–92 (MGRTGDLENA…KLGSGSRTRQ (92 aa)) lie on the Cytoplasmic side of the membrane. Over residues 21 to 35 (TSGTSSRSSTDSGLS) the composition is skewed to low complexity. A helical; Signal-anchor for type II membrane protein membrane pass occupies residues 93 to 113 (IFWALVILCLGGWVLALVLFL). The Vacuolar segment spans residues 114-916 (THGRASSQTA…VKRSVPAFAH (803 aa)). Residues asparagine 349 and asparagine 640 are each glycosylated (N-linked (GlcNAc...) asparagine). Catalysis depends on serine 754, which acts as the Charge relay system. Residues asparagine 808 and asparagine 813 are each glycosylated (N-linked (GlcNAc...) asparagine). Residues aspartate 831 and histidine 864 each act as charge relay system in the active site.

The protein belongs to the peptidase S9B family.

Its subcellular location is the vacuole membrane. It carries out the reaction Release of an N-terminal dipeptide, Xaa-Yaa-|-Zaa-, from a polypeptide, preferentially when Yaa is Pro, provided Zaa is neither Pro nor hydroxyproline.. Functionally, type IV dipeptidyl-peptidase which removes N-terminal dipeptides sequentially from polypeptides having unsubstituted N-termini provided that the penultimate residue is proline. The chain is Probable dipeptidyl-aminopeptidase B (dapB) from Aspergillus flavus (strain ATCC 200026 / FGSC A1120 / IAM 13836 / NRRL 3357 / JCM 12722 / SRRC 167).